Reading from the N-terminus, the 120-residue chain is Large ribosomal subunit protein eL8 (120 aa).

This sequence belongs to the eukaryotic ribosomal protein eL8 family. Part of the 50S ribosomal subunit. Probably part of the RNase P complex.

The protein localises to the cytoplasm. Its function is as follows. Multifunctional RNA-binding protein that recognizes the K-turn motif in ribosomal RNA, the RNA component of RNase P, box H/ACA, box C/D and box C'/D' sRNAs. This is Large ribosomal subunit protein eL8 from Methanosarcina mazei (strain ATCC BAA-159 / DSM 3647 / Goe1 / Go1 / JCM 11833 / OCM 88) (Methanosarcina frisia).